We begin with the raw amino-acid sequence, 354 residues long: MTETKQTDAAAPRLTSLSHGGGCGCKIAPGVLSELLRRTAPPALFPDLLVGTETSDDAAVYRLNDEQAIVATTDFFMPIVDDPFDFGRIAATNALSDVYAMGGKPILALALVGMPINVLPHETIAAVLRGGEAVCADAGIPVAGGHSIDSVEPIYGLAALGVVHPARVKRNAAARAGDVLVLGKPLGVGVLSAALKKDRLDAQGYAQMIATTTKLNRPGTALAALPGVHALTDVTGFGLLGHTLELARGAGLTARVRYGALPWLAGVEALVADGVLTGASGRNWAAYGHDVRLGDGLPAVAQALLTDPQTSGGLLVACAPEAVDDVLACFRDDGFERAAAIGEMVDGAARVDVS.

Residue Cys23 is part of the active site. ATP contacts are provided by residues Lys26 and 54-56 (TSD). Asp57 serves as a coordination point for Mg(2+). ATP-binding positions include Asp74, Asp97, and 145–147 (GHS). Asp97 contacts Mg(2+). Asp233 provides a ligand contact to Mg(2+).

This sequence belongs to the selenophosphate synthase 1 family. Class I subfamily. In terms of assembly, homodimer. Requires Mg(2+) as cofactor.

It catalyses the reaction hydrogenselenide + ATP + H2O = selenophosphate + AMP + phosphate + 2 H(+). Its function is as follows. Synthesizes selenophosphate from selenide and ATP. This is Selenide, water dikinase from Burkholderia pseudomallei (strain K96243).